A 290-amino-acid chain; its full sequence is Protease HtpX (290 aa).

2 helical membrane-spanning segments follow: residues 4–24 and 36–56; these read IFLF…TLKL and GSLL…SLFI. Position 142 (H142) interacts with Zn(2+). E143 is an active-site residue. Residue H146 coordinates Zn(2+). 2 helical membrane passes run 150 to 170 and 193 to 213; these read GDMV…MFFA and FVAT…IVMW. E219 serves as a coordination point for Zn(2+).

The protein belongs to the peptidase M48B family. Zn(2+) is required as a cofactor.

The protein localises to the cell inner membrane. The polypeptide is Protease HtpX (Stutzerimonas stutzeri (strain A1501) (Pseudomonas stutzeri)).